The chain runs to 367 residues: Phospho-N-acetylmuramoyl-pentapeptide-transferase (367 aa).

10 helical membrane-spanning segments follow: residues glycine 28 to leucine 48, threonine 75 to leucine 95, threonine 96 to isoleucine 116, phenylalanine 134 to alanine 154, leucine 175 to glycine 195, glycine 206 to valine 226, alanine 243 to tryptophan 263, phenylalanine 271 to isoleucine 291, leucine 295 to valine 315, and threonine 344 to leucine 364.

This sequence belongs to the glycosyltransferase 4 family. MraY subfamily. Mg(2+) serves as cofactor.

The protein localises to the cell inner membrane. The enzyme catalyses UDP-N-acetyl-alpha-D-muramoyl-L-alanyl-gamma-D-glutamyl-meso-2,6-diaminopimeloyl-D-alanyl-D-alanine + di-trans,octa-cis-undecaprenyl phosphate = di-trans,octa-cis-undecaprenyl diphospho-N-acetyl-alpha-D-muramoyl-L-alanyl-D-glutamyl-meso-2,6-diaminopimeloyl-D-alanyl-D-alanine + UMP. It participates in cell wall biogenesis; peptidoglycan biosynthesis. Catalyzes the initial step of the lipid cycle reactions in the biosynthesis of the cell wall peptidoglycan: transfers peptidoglycan precursor phospho-MurNAc-pentapeptide from UDP-MurNAc-pentapeptide onto the lipid carrier undecaprenyl phosphate, yielding undecaprenyl-pyrophosphoryl-MurNAc-pentapeptide, known as lipid I. This chain is Phospho-N-acetylmuramoyl-pentapeptide-transferase, found in Maricaulis maris (strain MCS10) (Caulobacter maris).